Here is a 330-residue protein sequence, read N- to C-terminus: RNA polymerase sigma factor RpoS (330 aa).

The sigma-70 factor domain-1 stretch occupies residues 56–89 (DATQLYLGEIGYSPLLTAEEEVYFARRALRGDVA). Residues 94–164 (MIESNLRLVV…ERAIMNQTRT (71 aa)) form a sigma-70 factor domain-2 region. Residues 118–121 (DLIE) carry the Interaction with polymerase core subunit RpoC motif. The segment at 174–249 (ELNVYLRTAR…DEKENGPEDT (76 aa)) is sigma-70 factor domain-3. Positions 262 to 315 (WLFELNAKQREVLARRFGLLGYEAATLEDVGREIGLTRERVRQIQVEGLRRLRE) are sigma-70 factor domain-4. The segment at residues 288–307 (LEDVGREIGLTRERVRQIQV) is a DNA-binding region (H-T-H motif).

Belongs to the sigma-70 factor family. RpoS subfamily. Interacts with the RNA polymerase core enzyme and RssB.

The protein resides in the cytoplasm. In terms of biological role, sigma factors are initiation factors that promote the attachment of RNA polymerase to specific initiation sites and are then released. This sigma factor is the master transcriptional regulator of the stationary phase and the general stress response. Controls, positively or negatively, the expression of several hundred genes, which are mainly involved in metabolism, transport, regulation and stress management. Functionally, protects stationary phase cells from killing induced by endoribonuclease MazF. This Escherichia coli (strain K12) protein is RNA polymerase sigma factor RpoS.